Consider the following 982-residue polypeptide: Chromosome partition protein Smc (982 aa).

33-40 (PNGSGKSN) serves as a coordination point for ATP. Coiled-coil stretches lie at residues 171 to 231 (RYTK…ELAV), 280 to 310 (SADM…VIID), and 337 to 377 (QTQL…QIEK). Residues 416 to 535 (TGILNTLGTF…AKDLNSAINL (120 aa)) form the SMC hinge domain. Coiled-coil stretches lie at residues 575-718 (SASL…SARE) and 753-822 (VKLS…IASN).

This sequence belongs to the SMC family. As to quaternary structure, homodimer.

It is found in the cytoplasm. Functionally, required for chromosome condensation and partitioning. This is Chromosome partition protein Smc from Mycoplasma genitalium (strain ATCC 33530 / DSM 19775 / NCTC 10195 / G37) (Mycoplasmoides genitalium).